Reading from the N-terminus, the 255-residue chain is GTP cyclohydrolase III 1 (255 aa).

The protein belongs to the archaeal-type GTP cyclohydrolase family.

It catalyses the reaction GTP + 3 H2O = 2-amino-5-formylamino-6-(5-phospho-D-ribosylamino)pyrimidin-4(3H)-one + 2 phosphate + 2 H(+). In terms of biological role, catalyzes the formation of 2-amino-5-formylamino-6-ribofuranosylamino-4(3H)-pyrimidinone ribonucleotide monophosphate and inorganic phosphate from GTP. Also has an independent pyrophosphate phosphohydrolase activity. In Halobacterium salinarum (strain ATCC 700922 / JCM 11081 / NRC-1) (Halobacterium halobium), this protein is GTP cyclohydrolase III 1 (gch31).